The primary structure comprises 211 residues: Scoloptoxin SSD43 (211 aa).

Positions 1–20 (MNFVIYGVIVVLTSQLYVDG) are cleaved as a signal peptide.

In terms of processing, contains 3 disulfide bonds. In terms of tissue distribution, expressed by the venom gland.

The protein resides in the secreted. In terms of biological role, shows trypsin inhibiting activity. The protein is highly thermally stable, since its incubation in boiling water during 10 minutes does not reduce its activity. This is Scoloptoxin SSD43 from Scolopendra dehaani (Thai centipede).